Consider the following 184-residue polypeptide: Small ribosomal subunit protein bS16 (184 aa).

The span at 150–160 (KKAAEAAEKAA) shows a compositional bias: basic and acidic residues. Residues 150 to 184 (KKAAEAAEKAAAEAPAEEATEAPAEEAAATEAAAE) are disordered. Residues 164 to 173 (PAEEATEAPA) show a composition bias toward acidic residues. Low complexity predominate over residues 174 to 184 (EEAAATEAAAE).

This sequence belongs to the bacterial ribosomal protein bS16 family.

The sequence is that of Small ribosomal subunit protein bS16 from Bacteroides thetaiotaomicron (strain ATCC 29148 / DSM 2079 / JCM 5827 / CCUG 10774 / NCTC 10582 / VPI-5482 / E50).